Consider the following 450-residue polypeptide: uncharacterized protein (450 aa).

Belongs to the heat shock protein 70 family.

This is an uncharacterized protein from Escherichia coli (strain K12).